Reading from the N-terminus, the 159-residue chain is Vesicle transport protein SFT2A (159 aa).

At methionine 1–tryptophan 36 the chain is on the cytoplasmic side. Serine 9 is modified (phosphoserine). Residues phenylalanine 37–leucine 57 form a helical membrane-spanning segment. Over proline 58–lysine 62 the chain is Lumenal. A helical membrane pass occupies residues leucine 63–methionine 83. The Cytoplasmic portion of the chain corresponds to glycine 84–arginine 97. The helical transmembrane segment at leucine 98 to tryptophan 118 threads the bilayer. The Lumenal segment spans residues arginine 119–glycine 122. The chain crosses the membrane as a helical span at residues leucine 123–isoleucine 143. At proline 144–glycine 159 the chain is on the cytoplasmic side.

Belongs to the SFT2 family.

The protein resides in the membrane. Functionally, may be involved in fusion of retrograde transport vesicles derived from an endocytic compartment with the Golgi complex. This Mus musculus (Mouse) protein is Vesicle transport protein SFT2A.